The primary structure comprises 330 residues: Peroxidase N1 (330 aa).

The N-terminal stretch at 1 to 29 is a signal peptide; the sequence is MEYYHHSINKMAMFMVILVLAIDVTMVLG. At Q30 the chain carries Pyrrolidone carboxylic acid. Cystine bridges form between C41–C117, C74–C79, C123–C326, and C201–C233. Catalysis depends on H72, which acts as the Proton acceptor. Ca(2+)-binding residues include D73, V76, G78, D80, and S82. P164 is a substrate binding site. Residue H194 coordinates heme b. A Ca(2+)-binding site is contributed by T195. N212 carries an N-linked (GlcNAc...) asparagine glycan. D246 and D254 together coordinate Ca(2+).

It belongs to the peroxidase family. Classical plant (class III) peroxidase subfamily. Requires Ca(2+) as cofactor. Heme b is required as a cofactor. Expressed at a high level in roots and at a trace level in lower leaves. Not expressed in upper leaves, stems, flowers, seeds and shoot apices.

The protein resides in the secreted. The enzyme catalyses 2 a phenolic donor + H2O2 = 2 a phenolic radical donor + 2 H2O. In terms of biological role, removal of H(2)O(2), oxidation of toxic reductants, biosynthesis and degradation of lignin, suberization, auxin catabolism, response to environmental stresses such as wounding, pathogen attack and oxidative stress. These functions might be dependent on each isozyme/isoform in each plant tissue. Can use NADH, NADPH and monolignols as substrates. This Nicotiana tabacum (Common tobacco) protein is Peroxidase N1.